A 194-amino-acid polypeptide reads, in one-letter code: Peptidyl-tRNA hydrolase (194 aa).

Residue Tyr16 coordinates tRNA. The Proton acceptor role is filled by His21. TRNA-binding residues include Phe66, Asn68, and Asn114.

Belongs to the PTH family. In terms of assembly, monomer.

The protein resides in the cytoplasm. It carries out the reaction an N-acyl-L-alpha-aminoacyl-tRNA + H2O = an N-acyl-L-amino acid + a tRNA + H(+). Its function is as follows. Hydrolyzes ribosome-free peptidyl-tRNAs (with 1 or more amino acids incorporated), which drop off the ribosome during protein synthesis, or as a result of ribosome stalling. Catalyzes the release of premature peptidyl moieties from peptidyl-tRNA molecules trapped in stalled 50S ribosomal subunits, and thus maintains levels of free tRNAs and 50S ribosomes. The polypeptide is Peptidyl-tRNA hydrolase (Geobacter metallireducens (strain ATCC 53774 / DSM 7210 / GS-15)).